Here is a 547-residue protein sequence, read N- to C-terminus: MKTKFIFITGGVLSSLGKGLAAASVGALLKARGLKVTIQKLDPYINVDPGTMNPFQHGEVYVTDDGAETDLDLGHYERYLAEPMSQKNNYTSGSIYHRVITKERRGDYLGGTVQVIPHVTDEIKNAVLSLAEDDPDVALIEIGGTVGDIEGLPFLEAIRQLRGDLGKDRCLYIHLTLVPYLRAAGEHKTKPTQHSVKELRSIGIQPDIILCRCEEAITADLKRKIALFCNVDQDAVFSAVDVKNIYEVPLRFYEEGFDQKIAIMLRLPAKNPNLEPWETLVDTCAHPQGRVTIGIVGKYVDLKEAYKSLHEALVHGGVANKVAVDLKYVNSEEITEENVAEALKGLDGILVPGGFGYRGVEGKILTIRYARENRVPFFGICLGMQCAVIEFARNVMGLEDANSEEFNELSKNKVIYLMTEWFDHRRQAVERRDSSSDKGGTMRLGSYPCVVVPDTKAHDAYGVKHIDERHRHRFEFNKAYFDAMAQSGMVFSGLSPDGELVEIVELPDHPWFLGCQFHPEFKSNPMQPHPLFREFIRAAKTHPAGKR.

Positions 1–267 are amidoligase domain; sequence MKTKFIFITG…DQKIAIMLRL (267 aa). Ser14 provides a ligand contact to CTP. Ser14 is a binding site for UTP. Residues 15 to 20 and Asp72 each bind ATP; that span reads SLGKGL. Mg(2+)-binding residues include Asp72 and Glu141. CTP is bound by residues 148-150, 188-193, and Lys224; these read DIE and KTKPTQ. Residues 188–193 and Lys224 contribute to the UTP site; that span reads KTKPTQ. Residues 292-545 enclose the Glutamine amidotransferase type-1 domain; it reads TIGIVGKYVD…IRAAKTHPAG (254 aa). Gly354 lines the L-glutamine pocket. Cys381 functions as the Nucleophile; for glutamine hydrolysis in the catalytic mechanism. L-glutamine contacts are provided by residues 382 to 385, Glu405, and Arg473; that span reads LGMQ. Catalysis depends on residues His518 and Glu520.

The protein belongs to the CTP synthase family. In terms of assembly, homotetramer.

The catalysed reaction is UTP + L-glutamine + ATP + H2O = CTP + L-glutamate + ADP + phosphate + 2 H(+). It carries out the reaction L-glutamine + H2O = L-glutamate + NH4(+). The enzyme catalyses UTP + NH4(+) + ATP = CTP + ADP + phosphate + 2 H(+). It functions in the pathway pyrimidine metabolism; CTP biosynthesis via de novo pathway; CTP from UDP: step 2/2. Its activity is regulated as follows. Allosterically activated by GTP, when glutamine is the substrate; GTP has no effect on the reaction when ammonia is the substrate. The allosteric effector GTP functions by stabilizing the protein conformation that binds the tetrahedral intermediate(s) formed during glutamine hydrolysis. Inhibited by the product CTP, via allosteric rather than competitive inhibition. In terms of biological role, catalyzes the ATP-dependent amination of UTP to CTP with either L-glutamine or ammonia as the source of nitrogen. Regulates intracellular CTP levels through interactions with the four ribonucleotide triphosphates. The chain is CTP synthase from Nitratidesulfovibrio vulgaris (strain DP4) (Desulfovibrio vulgaris).